We begin with the raw amino-acid sequence, 152 residues long: Ribonuclease pancreatic (152 aa).

The N-terminal stretch at 1 to 24 is a signal peptide; sequence MALDKSVILLPLLVLVLLVLGCLG. Substrate-binding residues include K31 and R34. The Proton acceptor role is filled by H36. Residue N46 is glycosylated (N-linked (GlcNAc...) asparagine). Cystine bridges form between C50-C108, C64-C119, C82-C134, and C89-C96. Residues 65–69, K90, and R109 each bind substrate; that span reads KPVNT. Residue N112 is glycosylated (N-linked (GlcNAc...) asparagine). The active-site Proton donor is H143.

This sequence belongs to the pancreatic ribonuclease family. Monomer. Interacts with and forms tight 1:1 complexes with RNH1. Dimerization of two such complexes may occur. Interaction with RNH1 inhibits this protein.

The protein localises to the secreted. It catalyses the reaction an [RNA] containing cytidine + H2O = an [RNA]-3'-cytidine-3'-phosphate + a 5'-hydroxy-ribonucleotide-3'-[RNA].. It carries out the reaction an [RNA] containing uridine + H2O = an [RNA]-3'-uridine-3'-phosphate + a 5'-hydroxy-ribonucleotide-3'-[RNA].. Functionally, endonuclease that catalyzes the cleavage of RNA on the 3' side of pyrimidine nucleotides. Acts on single-stranded and double-stranded RNA. This is Ribonuclease pancreatic (RNASE1) from Papio hamadryas (Hamadryas baboon).